We begin with the raw amino-acid sequence, 299 residues long: Non-homologous end joining protein Ku (299 aa).

The Ku domain maps to 10–188 (ISFGLVHIPV…TEAVTDARLT (179 aa)). 2 disordered regions span residues 227–249 (AGEGKIEDVETDPGEEERKSADV) and 261–299 (AGKSSASKTRKPAAKDKVADKQSPKPKRPAVRKKTGKAS). The segment covering 273–283 (AAKDKVADKQS) has biased composition (basic and acidic residues). The span at 284–299 (PKPKRPAVRKKTGKAS) shows a compositional bias: basic residues.

The protein belongs to the prokaryotic Ku family. As to quaternary structure, homodimer. Interacts with LigD.

Its function is as follows. With LigD forms a non-homologous end joining (NHEJ) DNA repair enzyme, which repairs dsDNA breaks with reduced fidelity. Binds linear dsDNA with 5'- and 3'- overhangs but not closed circular dsDNA nor ssDNA. Recruits and stimulates the ligase activity of LigD. The protein is Non-homologous end joining protein Ku of Pseudomonas syringae pv. tomato (strain ATCC BAA-871 / DC3000).